The sequence spans 104 residues: UPF0473 protein LJ_0477 (104 aa).

Belongs to the UPF0473 family.

This is UPF0473 protein LJ_0477 from Lactobacillus johnsonii (strain CNCM I-12250 / La1 / NCC 533).